The primary structure comprises 511 residues: 2,3-bisphosphoglycerate-independent phosphoglycerate mutase (511 aa).

D12 serves as a coordination point for Mn(2+). Y36 is modified (phosphotyrosine). S62 provides a ligand contact to Mn(2+). S62 functions as the Phosphoserine intermediate in the catalytic mechanism. Substrate contacts are provided by residues H123, 153 to 154 (RD), R185, R191, 261 to 264 (RPDR), and K336. Residues D403, H407, D444, H445, and H462 each coordinate Mn(2+).

The protein belongs to the BPG-independent phosphoglycerate mutase family. In terms of assembly, monomer. It depends on Mn(2+) as a cofactor.

It catalyses the reaction (2R)-2-phosphoglycerate = (2R)-3-phosphoglycerate. It functions in the pathway carbohydrate degradation; glycolysis; pyruvate from D-glyceraldehyde 3-phosphate: step 3/5. Its function is as follows. Catalyzes the interconversion of 2-phosphoglycerate and 3-phosphoglycerate. The polypeptide is 2,3-bisphosphoglycerate-independent phosphoglycerate mutase (Geobacillus kaustophilus (strain HTA426)).